The following is a 370-amino-acid chain: Phospho-N-acetylmuramoyl-pentapeptide-transferase (370 aa).

Helical transmembrane passes span 31 to 51 (LTSM…LYGL), 73 to 93 (TMGG…WGNL), 98 to 118 (IIVL…DDYM), 135 to 155 (LLSI…TGVI), 177 to 197 (GPVL…IIGS), 209 to 229 (GLAT…AYVS), 251 to 271 (VFLS…AHPA), 273 to 293 (VFMG…IVIL), 298 to 318 (ILLL…ILQV), and 347 to 367 (KIVI…LSTL).

This sequence belongs to the glycosyltransferase 4 family. MraY subfamily. Mg(2+) is required as a cofactor.

It is found in the cell inner membrane. It catalyses the reaction UDP-N-acetyl-alpha-D-muramoyl-L-alanyl-gamma-D-glutamyl-meso-2,6-diaminopimeloyl-D-alanyl-D-alanine + di-trans,octa-cis-undecaprenyl phosphate = di-trans,octa-cis-undecaprenyl diphospho-N-acetyl-alpha-D-muramoyl-L-alanyl-D-glutamyl-meso-2,6-diaminopimeloyl-D-alanyl-D-alanine + UMP. Its pathway is cell wall biogenesis; peptidoglycan biosynthesis. Its function is as follows. Catalyzes the initial step of the lipid cycle reactions in the biosynthesis of the cell wall peptidoglycan: transfers peptidoglycan precursor phospho-MurNAc-pentapeptide from UDP-MurNAc-pentapeptide onto the lipid carrier undecaprenyl phosphate, yielding undecaprenyl-pyrophosphoryl-MurNAc-pentapeptide, known as lipid I. The polypeptide is Phospho-N-acetylmuramoyl-pentapeptide-transferase (Leptospira borgpetersenii serovar Hardjo-bovis (strain JB197)).